Reading from the N-terminus, the 96-residue chain is Glycine-rich protein DC7.1 (96 aa).

The signal sequence occupies residues 1–25 (MGSKIFLLLGLSIAFALLISSEVAA). The tract at residues 29-66 (SETTTEGASLDGGHHGGGGGGHYSGGGGHGGSHHGGGG) is disordered. 2 tandem repeats follow at residues 42-50 (HHGGGGGGH) and 61-67 (HHGGGGH). The 2 approximate repeats of H-H-G(4,6)-H stretch occupies residues 42 to 67 (HHGGGGGGHYSGGGGHGGSHHGGGGH). Positions 43-66 (HGGGGGGHYSGGGGHGGSHHGGGG) are enriched in gly residues.

It belongs to the GRP family.

Functionally, may be connected with the initiation of embryogenesis or with the metabolic changes produced by the removal of auxins. This Daucus carota (Wild carrot) protein is Glycine-rich protein DC7.1.